Here is a 410-residue protein sequence, read N- to C-terminus: Beta-arrestin-2 (410 aa).

Y48 is subject to Phosphotyrosine. A hydroxyproline; by PHD2 mark is found at P176 and P181. The interaction with TRAF6 stretch occupies residues 241-410 (ADICLFSTAQ…KDDDCDDQFC (170 aa)). At S361 the chain carries Phosphoserine. The interval 364–410 (RETDVPVDTNLIEFDTNYATDDDIVFEDFARLRLKGMKDDDCDDQFC) is interaction with AP2B1. Residue T383 is modified to Phosphothreonine. The [DE]-X(1,2)-F-X-X-[FL]-X-X-X-R motif signature appears at 386-396 (DIVFEDFARLR).

This sequence belongs to the arrestin family. In terms of assembly, homooligomer; the self-association is mediated by InsP6-binding. Heterooligomer with ARRB1; the association is mediated by InsP6-binding. Interacts with ADRB2 and CHRM2. Interacts with PDE4A. Interacts with PDE4D. Interacts with MAPK10, MAPK1 and MAPK3. Interacts with DRD2. Interacts with FSHR. Interacts with CLTC. Interacts with HTR2C. Interacts with CCR5. Interacts with CXCR4. Interacts with SRC. Interacts with DUSP16; the interaction is interrupted by stimulation of AGTR1 and activation of MAPK10. Interacts with CHUK; the interaction is enhanced stimulation of ADRB2. Interacts with RELA. Interacts with MDM2; the interaction is enhanced by activation of GPCRs. Interacts with SLC9A5. Interacts with TRAF6. Interacts with IGF1R. Interacts with ENG. Interacts with ARRB2. Interacts with KIR2DL1, KIR2DL3 and KIR2DL4. Interacts with LDLR. Interacts with AP2B1. Interacts with C5AR1. Interacts with RAF1. Interacts with MAP2K1. Interacts with MAPK1. Interacts with MAPK10; the interaction enhances MAPK10 activation by MAP3K5. Interacts with MAP2K4; the interaction is enhanced by presence of MAP3K5 and MAPK10. Interacts with MAP3K5. Interacts with AKT1. Interacts with IKBKB and MAP3K14. Interacts with SMO (activated). Interacts with GSK3A and GSK3B. Interacts with CXCR4; the interaction is dependent on C-terminal phosphorylation of CXCR4 and allows activation of MAPK1 and MAPK3. Interacts with GPR143. Interacts with HCK and CXCR1 (phosphorylated). Associates with protein phosphatase 2A (PP2A). Interacts with ACKR3 and ACKR4. Interacts with ARRDC1; the interaction is direct. Interacts with GPR61, GPR62 and GPR135. Interacts (via NACHT and LRR domains) with NLRP3; this interaction is direct and inducible by omega-3 polyunsaturated fatty acids (PUFAs). Interacts with FFAR4 (via C-terminus); this interaction is stimulated by long-chain fatty acids (LCFAs). Interacts with GPR35. Interacts with GPR84. Interacts with TIGIT; this interaction inhibits the NF-kappa-B pathway. Interacts with TGFBR3. Post-translationally, phosphorylated at Thr-383 in the cytoplasm; probably dephosphorylated at the plasma membrane. The phosphorylation does not regulate internalization and recycling of ADRB2, interaction with clathrin or AP2B1. In terms of processing, the ubiquitination status appears to regulate the formation and trafficking of beta-arrestin-GPCR complexes and signaling. Ubiquitination appears to occur GPCR-specific. Ubiquitinated by MDM2; the ubiquitination is required for rapid internalization of ADRB2. Deubiquitinated by USP33; the deubiquitination leads to a dissociation of the beta-arrestin-GPCR complex. Stimulation of a class A GPCR, such as ADRB2, induces transient ubiquitination and subsequently promotes association with USP33. Stimulation of a class B GPCR promotes a sustained ubiquitination. Deubiquitinated by USP20; allowing USP20 to deubiquitinate TRAF6 leading to inhibition of NF-kappa-B signaling. Hydroxylation by PHD2 modulates the rate of internalization by slowing down recruitment to the plasma membrane and inhibiting subsequent co-internalization with class A receptors. As to expression, predominantly localized in neuronal tissues and in the spleen.

It localises to the cytoplasm. It is found in the nucleus. The protein resides in the cell membrane. Its subcellular location is the membrane. The protein localises to the clathrin-coated pit. It localises to the cytoplasmic vesicle. Its function is as follows. Functions in regulating agonist-mediated G-protein coupled receptor (GPCR) signaling by mediating both receptor desensitization and resensitization processes. During homologous desensitization, beta-arrestins bind to the GPRK-phosphorylated receptor and sterically preclude its coupling to the cognate G-protein; the binding appears to require additional receptor determinants exposed only in the active receptor conformation. The beta-arrestins target many receptors for internalization by acting as endocytic adapters (CLASPs, clathrin-associated sorting proteins) and recruiting the GPRCs to the adapter protein 2 complex 2 (AP-2) in clathrin-coated pits (CCPs). However, the extent of beta-arrestin involvement appears to vary significantly depending on the receptor, agonist and cell type. Internalized arrestin-receptor complexes traffic to intracellular endosomes, where they remain uncoupled from G-proteins. Two different modes of arrestin-mediated internalization occur. Class A receptors, like ADRB2, OPRM1, ENDRA, D1AR and ADRA1B dissociate from beta-arrestin at or near the plasma membrane and undergo rapid recycling. Class B receptors, like AVPR2, AGTR1, NTSR1, TRHR and TACR1 internalize as a complex with arrestin and traffic with it to endosomal vesicles, presumably as desensitized receptors, for extended periods of time. Receptor resensitization then requires that receptor-bound arrestin is removed so that the receptor can be dephosphorylated and returned to the plasma membrane. Mediates endocytosis of CCR7 following ligation of CCL19 but not CCL21. Involved in internalization of P2RY1, P2RY4, P2RY6 and P2RY11 and ATP-stimulated internalization of P2RY2. Involved in phosphorylation-dependent internalization of OPRD1 and subsequent recycling or degradation. Involved in ubiquitination of IGF1R. Beta-arrestins function as multivalent adapter proteins that can switch the GPCR from a G-protein signaling mode that transmits short-lived signals from the plasma membrane via small molecule second messengers and ion channels to a beta-arrestin signaling mode that transmits a distinct set of signals that are initiated as the receptor internalizes and transits the intracellular compartment. Acts as a signaling scaffold for MAPK pathways such as MAPK1/3 (ERK1/2) and MAPK10 (JNK3). ERK1/2 and JNK3 activated by the beta-arrestin scaffold are largely excluded from the nucleus and confined to cytoplasmic locations such as endocytic vesicles, also called beta-arrestin signalosomes. Acts as a signaling scaffold for the AKT1 pathway. GPCRs for which the beta-arrestin-mediated signaling relies on both ARRB1 and ARRB2 (codependent regulation) include ADRB2, F2RL1 and PTH1R. For some GPCRs the beta-arrestin-mediated signaling relies on either ARRB1 or ARRB2 and is inhibited by the other respective beta-arrestin form (reciprocal regulation). Increases ERK1/2 signaling in AGTR1- and AVPR2-mediated activation (reciprocal regulation). Involved in CCR7-mediated ERK1/2 signaling involving ligand CCL19. Is involved in type-1A angiotensin II receptor/AGTR1-mediated ERK activity. Is involved in type-1A angiotensin II receptor/AGTR1-mediated MAPK10 activity. Is involved in dopamine-stimulated AKT1 activity in the striatum by disrupting the association of AKT1 with its negative regulator PP2A. Involved in AGTR1-mediated chemotaxis. Appears to function as signaling scaffold involved in regulation of MIP-1-beta-stimulated CCR5-dependent chemotaxis. Involved in attenuation of NF-kappa-B-dependent transcription in response to GPCR or cytokine stimulation by interacting with and stabilizing CHUK. Suppresses UV-induced NF-kappa-B-dependent activation by interacting with CHUK. The function is promoted by stimulation of ADRB2 and dephosphorylation of ARRB2. Involved in IL8-mediated granule release in neutrophils. Involved in p53/TP53-mediated apoptosis by regulating MDM2 and reducing the MDM2-mediated degradation of p53/TP53. May serve as nuclear messenger for GPCRs. Upon stimulation of OR1D2, may be involved in regulation of gene expression during the early processes of fertilization. Also involved in regulation of receptors other than GPCRs. Involved in endocytosis of TGFBR2 and TGFBR3 and down-regulates TGF-beta signaling such as NF-kappa-B activation. Involved in endocytosis of low-density lipoprotein receptor/LDLR. Involved in endocytosis of smoothened homolog/Smo, which also requires GRK2. Involved in endocytosis of SLC9A5. Involved in endocytosis of ENG and subsequent TGF-beta-mediated ERK activation and migration of epithelial cells. Involved in Toll-like receptor and IL-1 receptor signaling through the interaction with TRAF6 which prevents TRAF6 autoubiquitination and oligomerization required for activation of NF-kappa-B and JUN. Involved in insulin resistance by acting as insulin-induced signaling scaffold for SRC, AKT1 and INSR. Involved in regulation of inhibitory signaling of natural killer cells by recruiting PTPN6 and PTPN11 to KIR2DL1. Involved in the internalization of the atypical chemokine receptor ACKR3. Acts as an adapter protein coupling FFAR4 receptor to specific downstream signaling pathways, as well as mediating receptor endocytosis. During the activation step of NLRP3 inflammasome, directly associates with NLRP3 leading to inhibition of pro-inflammatory cytokine release and inhibition of inflammation. The chain is Beta-arrestin-2 (Arrb2) from Mus musculus (Mouse).